A 555-amino-acid polypeptide reads, in one-letter code: Glutamine--tRNA ligase (555 aa).

Residues 34-44 (PEPNGYLHIGH) carry the 'HIGH' region motif. ATP contacts are provided by residues 35–37 (EPN) and 41–47 (HIGHAKS). L-glutamine is bound by residues Asp67 and Tyr212. Residues Thr231, 261–262 (RL), and 269–271 (MSK) each bind ATP. Positions 268–272 (VMSKR) match the 'KMSKS' region motif. Residues 317–324 (TKQDNTIE) form an interaction with tRNA region.

This sequence belongs to the class-I aminoacyl-tRNA synthetase family. Monomer.

The protein resides in the cytoplasm. It carries out the reaction tRNA(Gln) + L-glutamine + ATP = L-glutaminyl-tRNA(Gln) + AMP + diphosphate. The sequence is that of Glutamine--tRNA ligase from Salmonella schwarzengrund (strain CVM19633).